Consider the following 251-residue polypeptide: Cholesterol 25-hydroxylase-like protein (251 aa).

Transmembrane regions (helical) follow at residues Phe22–Leu42, Trp69–Leu89, and Val108–Leu128. The Fatty acid hydroxylase domain occupies Ala113–Thr247. Residues Trp126–His130 carry the Histidine box-1 motif. The Histidine box-2 motif lies at His141–His145. Positions His222–Gln228 match the Histidine box-3 motif.

This sequence belongs to the sterol desaturase family. The cofactor is Fe cation.

The protein resides in the endoplasmic reticulum membrane. It catalyses the reaction cholesterol + AH2 + O2 = 25-hydroxycholesterol + A + H2O. The catalysed reaction is cholesterol + NADPH + O2 + H(+) = 25-hydroxycholesterol + NADP(+) + H2O. Catalyzes the formation of 25-hydroxycholesterol from cholesterol, leading to repress cholesterol biosynthetic enzymes. Plays a key role in cell positioning and movement in lymphoid tissues: 25-hydroxycholesterol is an intermediate in biosynthesis of 7-alpha,25-dihydroxycholesterol (7-alpha,25-OHC), an oxysterol that acts as a ligand for the G protein-coupled receptor GPR183/EBI2, a chemotactic receptor for a number of lymphoid cells. May play an important role in regulating lipid metabolism by synthesizing a corepressor that blocks sterol regulatory element binding protein (SREBP) processing. In testis, production of 25-hydroxycholesterol by macrophages may play a role in Leydig cell differentiation. In Danio rerio (Zebrafish), this protein is Cholesterol 25-hydroxylase-like protein (ch25h).